The following is a 402-amino-acid chain: Sex hormone-binding globulin (402 aa).

Residues 1–29 form the signal peptide; that stretch reads MESRGPLATSRLLLLLLLLLLRHTRQGWA. O-linked (GalNAc...) threonine glycosylation occurs at Thr36. 2 Laminin G-like domains span residues 45-217 and 224-390; these read VHLS…LRSC and GIFL…THSC. Disulfide bonds link Cys193/Cys217 and Cys362/Cys390. N-linked (GlcNAc...) asparagine glycosylation is found at Asn380 and Asn396.

As to quaternary structure, homodimer. Variant Asn-356 contains one N-linked (GlcNAc...) at position 356. As to expression, isoform 1 and isoform 2 are present in liver and testis.

The protein resides in the secreted. Functions as an androgen transport protein, but may also be involved in receptor mediated processes. Each dimer binds one molecule of steroid. Specific for 5-alpha-dihydrotestosterone, testosterone, and 17-beta-estradiol. Regulates the plasma metabolic clearance rate of steroid hormones by controlling their plasma concentration. The chain is Sex hormone-binding globulin from Homo sapiens (Human).